Reading from the N-terminus, the 1028-residue chain is Contactin-6 (1028 aa).

Positions 1–19 (MRLLWKLVILLPLINSCAG) are cleaved as a signal peptide. Ig-like C2-type domains are found at residues 32–117 (PQDV…AKLQ), 122–208 (EDFE…RSVQ), 227–308 (PKIE…RNLA), 318–402 (PEWE…AELR), 408–502 (PDFS…RTII), and 500–587 (TIIT…ERLS). Disulfide bonds link cysteine 50–cysteine 100, cysteine 144–cysteine 196, cysteine 249–cysteine 297, cysteine 339–cysteine 386, cysteine 431–cysteine 479, and cysteine 521–cysteine 577. 2 N-linked (GlcNAc...) asparagine glycosylation sites follow: asparagine 65 and asparagine 193. Residues asparagine 368, asparagine 377, and asparagine 468 are each glycosylated (N-linked (GlcNAc...) asparagine). 4 Fibronectin type-III domains span residues 600–698 (PPED…TKAS), 703–800 (APGN…SGED), 805–901 (APRG…TKKS), and 902–996 (PPSQ…KMSS). 4 N-linked (GlcNAc...) asparagine glycosylation sites follow: asparagine 659, asparagine 765, asparagine 860, and asparagine 865. Phosphotyrosine is present on tyrosine 882. Asparagine 895, asparagine 931, asparagine 956, and asparagine 957 each carry an N-linked (GlcNAc...) asparagine glycan. A lipid anchor (GPI-anchor amidated serine) is attached at serine 999. Positions 1000–1028 (TGVQISKPSTQSLSMVGVFYCFAIHPLSR) are cleaved as a propeptide — removed in mature form.

The protein belongs to the immunoglobulin superfamily. Contactin family. As to quaternary structure, interacts with PTPRG. In terms of tissue distribution, expressed in brain. In brain, it is preferentially expressed in the accessory olfactory bulb, layers II/III and V of the cerebral cortex, piriform cortex, anterior thalamic nuclei, locus coeruleus of the pons and mesencephalic trigeminal nucleus and in Purkinje cells of the cerebellum.

Its subcellular location is the cell membrane. Its function is as follows. Contactins mediate cell surface interactions during nervous system development. Participates in oligodendrocytes generation by acting as a ligand of NOTCH1. Its association with NOTCH1 promotes NOTCH1 activation through the released notch intracellular domain (NICD) and subsequent translocation to the nucleus. Involved in motor coordination. This chain is Contactin-6 (Cntn6), found in Mus musculus (Mouse).